A 480-amino-acid chain; its full sequence is Iron-sulfur cluster assembly SufBD family protein slr0074 (480 aa).

Belongs to the iron-sulfur cluster assembly SufBD family.

In Synechocystis sp. (strain ATCC 27184 / PCC 6803 / Kazusa), this protein is Iron-sulfur cluster assembly SufBD family protein slr0074.